Here is a 122-residue protein sequence, read N- to C-terminus: Large ribosomal subunit protein uL18 (122 aa).

The segment at 1-20 (MFKKVSKNANRLSRHQRVRN) is disordered.

Belongs to the universal ribosomal protein uL18 family. In terms of assembly, part of the 50S ribosomal subunit; part of the 5S rRNA/L5/L18/L25 subcomplex. Contacts the 5S and 23S rRNAs.

Its function is as follows. This is one of the proteins that bind and probably mediate the attachment of the 5S RNA into the large ribosomal subunit, where it forms part of the central protuberance. The protein is Large ribosomal subunit protein uL18 of Alkaliphilus oremlandii (strain OhILAs) (Clostridium oremlandii (strain OhILAs)).